The sequence spans 400 residues: Dual specificity mitogen-activated protein kinase kinase 2 (400 aa).

M1 is modified (N-acetylmethionine). Residue S23 is modified to Phosphoserine. Residues 72 to 369 enclose the Protein kinase domain; sequence FERISELGAG…LKMLMSHTFI (298 aa). ATP contacts are provided by residues 78 to 86 and K101; that span reads LGAGNGGVV. D194 functions as the Proton acceptor in the catalytic mechanism. Phosphoserine; by RAF is present on S222. Phosphoserine is present on residues S226, S293, S295, and S306. The interval 288–309 is disordered; it reads EGEPHSISPRPRPPGRPISGHG. Residues T394 and T396 each carry the phosphothreonine modification.

This sequence belongs to the protein kinase superfamily. STE Ser/Thr protein kinase family. MAP kinase kinase subfamily. Interacts with MORG1. Interacts with SGK1. Interacts with KSR1. Interacts with KSR1 and BRAF; the interaction with KSR1 mediates KSR1-BRAF dimerization. Interacts with GLS. Mg(2+) serves as cofactor. MAPKK is itself dependent on Ser/Thr phosphorylation for activity catalyzed by MAP kinase kinase kinases (RAF or MEKK1).

It localises to the cytoplasm. Its subcellular location is the membrane. It carries out the reaction L-seryl-[protein] + ATP = O-phospho-L-seryl-[protein] + ADP + H(+). It catalyses the reaction L-threonyl-[protein] + ATP = O-phospho-L-threonyl-[protein] + ADP + H(+). The enzyme catalyses L-tyrosyl-[protein] + ATP = O-phospho-L-tyrosyl-[protein] + ADP + H(+). In terms of biological role, catalyzes the concomitant phosphorylation of a threonine and a tyrosine residue in a Thr-Glu-Tyr sequence located in MAP kinases. Activates the ERK1 and ERK2 MAP kinases. Activates BRAF in a KSR1 or KSR2-dependent manner; by binding to KSR1 or KSR2 releases the inhibitory intramolecular interaction between KSR1 or KSR2 protein kinase and N-terminal domains which promotes KSR1 or KSR2-BRAF dimerization and BRAF activation. This Canis lupus familiaris (Dog) protein is Dual specificity mitogen-activated protein kinase kinase 2 (MAP2K2).